A 315-amino-acid chain; its full sequence is Spermidine synthase 1 (315 aa).

A PABS domain is found at 25–262 (PGWFSEISPL…GMIGFMLCST (238 aa)). An S-adenosyl 3-(methylsulfanyl)propylamine-binding site is contributed by Gln-56. Tyr-86 is a putrescine binding site. Residues Gln-87, Asp-111, Glu-131, 162-163 (DG), and Asp-181 each bind S-adenosyl 3-(methylsulfanyl)propylamine. Asp-181 acts as the Proton acceptor in catalysis. Putrescine-binding positions include 181-184 (DSSD) and Tyr-250.

It belongs to the spermidine/spermine synthase family.

It catalyses the reaction S-adenosyl 3-(methylsulfanyl)propylamine + putrescine = S-methyl-5'-thioadenosine + spermidine + H(+). Its pathway is amine and polyamine biosynthesis; spermidine biosynthesis; spermidine from putrescine: step 1/1. This is Spermidine synthase 1 from Hyoscyamus niger (Black henbane).